A 489-amino-acid polypeptide reads, in one-letter code: 2-(3-amino-3-carboxypropyl)histidine synthase subunit 2 (489 aa).

Position 1 is an N-acetylmethionine (Met-1). Ser-7 is subject to Phosphoserine. Residues Cys-89, Cys-110, and Cys-341 each coordinate [4Fe-4S] cluster. The segment at 398–489 (PPPESELWDT…AIAYEDEGSG (92 aa)) is required for function. Thr-435 carries the post-translational modification Phosphothreonine. Phosphoserine is present on residues Ser-446 and Ser-456. Thr-467 carries the post-translational modification Phosphothreonine. The residue at position 488 (Ser-488) is a Phosphoserine.

This sequence belongs to the DPH1/DPH2 family. DPH2 subfamily. Component of the 2-(3-amino-3-carboxypropyl)histidine synthase complex composed of DPH1, DPH2, DPH3 and a NADH-dependent reductase. Interacts with DPH1. [4Fe-4S] cluster serves as cofactor.

Its pathway is protein modification; peptidyl-diphthamide biosynthesis. Functionally, required for the first step of diphthamide biosynthesis, a post-translational modification of histidine which occurs in elongation factor 2. DPH1 and DPH2 transfer a 3-amino-3-carboxypropyl (ACP) group from S-adenosyl-L-methionine (SAM) to a histidine residue, the reaction is assisted by a reduction system comprising DPH3 and a NADH-dependent reductase. Facilitates the reduction of the catalytic iron-sulfur cluster found in the DPH1 subunit. This Cricetulus griseus (Chinese hamster) protein is 2-(3-amino-3-carboxypropyl)histidine synthase subunit 2 (DPH2).